Reading from the N-terminus, the 210-residue chain is 3-demethoxyubiquinol 3-hydroxylase (210 aa).

The Fe cation site is built by Glu59, Glu89, His92, Glu141, Glu173, and His176.

The protein belongs to the COQ7 family. The cofactor is Fe cation.

It is found in the cell membrane. The enzyme catalyses a 5-methoxy-2-methyl-3-(all-trans-polyprenyl)benzene-1,4-diol + AH2 + O2 = a 3-demethylubiquinol + A + H2O. The protein operates within cofactor biosynthesis; ubiquinone biosynthesis. Catalyzes the hydroxylation of 2-nonaprenyl-3-methyl-6-methoxy-1,4-benzoquinol during ubiquinone biosynthesis. This is 3-demethoxyubiquinol 3-hydroxylase from Albidiferax ferrireducens (strain ATCC BAA-621 / DSM 15236 / T118) (Rhodoferax ferrireducens).